A 203-amino-acid chain; its full sequence is Large ribosomal subunit protein uL18 (203 aa).

It belongs to the universal ribosomal protein uL18 family. In terms of assembly, part of the 50S ribosomal subunit. Contacts the 5S and 23S rRNAs.

In terms of biological role, this is one of the proteins that bind and probably mediate the attachment of the 5S RNA into the large ribosomal subunit, where it forms part of the central protuberance. The chain is Large ribosomal subunit protein uL18 from Pyrococcus furiosus (strain ATCC 43587 / DSM 3638 / JCM 8422 / Vc1).